The following is a 25-amino-acid chain: Hypotensin-2 (25 aa).

The segment at Ala-1–Ala-25 is disordered. Ser-6 carries the post-translational modification Phosphoserine. Positions Asp-11–Ala-25 are enriched in basic and acidic residues.

It belongs to the non-disulfide-bridged peptide (NDBP) superfamily. Expressed by the venom gland.

It is found in the secreted. In terms of biological role, agonist of the B2 bradykinin receptor (BDKRB2). Potentiates the hypotensive effect of bradykinin (BK) and induces a direct vasorelaxing effect, independently of BK, by endothelium- and nitric oxide (NO)-dependent mechanisms in rat aortic ring preparations. Does not inhibit the angiotensin-converting enzyme (ACE). Also exerts proangiogenic, antiinflammatory, and antifibrogenic activities. Does not inhibit the angiotensin-converting enzyme (ACE) but weakly increases its activity, and weakly inhibits neprilysin (NEP) in a non-competitive manner. Exerts intermediate cytotoxicity and pro-inflammatory effects on mouse macrophages, and increases the phagocytic activity of these murine cells. Presents weak hemolytic activity at physiological concentrations (micromolar range), and weak lactate dehydrogenase (LDH) release from mast cells. Does not induce mast cell degranulation, and antimicrobial effects. In vivo, causes intense pain (but no edema formation), when injected in mice hind paws. Also induces discomfort and anxiety in mice, as it moderately diminishes locomotion and moderately increases rearing behavior. The chain is Hypotensin-2 from Tityus serrulatus (Brazilian scorpion).